An 89-amino-acid chain; its full sequence is Cytochrome c6 (89 aa).

Positions 15, 18, 19, and 61 each coordinate heme c.

Belongs to the cytochrome c family. PetJ subfamily. Monomer. Post-translationally, binds 1 heme c group covalently per subunit.

It is found in the plastid. The protein localises to the chloroplast thylakoid lumen. Functionally, functions as an electron carrier between membrane-bound cytochrome b6-f and photosystem I in oxygenic photosynthesis. In Tetradesmus obliquus (Green alga), this protein is Cytochrome c6 (petJ).